Consider the following 429-residue polypeptide: Glutamate-1-semialdehyde 2,1-aminomutase (429 aa).

N6-(pyridoxal phosphate)lysine is present on lysine 265.

It belongs to the class-III pyridoxal-phosphate-dependent aminotransferase family. HemL subfamily. Homodimer. Pyridoxal 5'-phosphate is required as a cofactor.

The protein localises to the cytoplasm. It carries out the reaction (S)-4-amino-5-oxopentanoate = 5-aminolevulinate. It participates in porphyrin-containing compound metabolism; protoporphyrin-IX biosynthesis; 5-aminolevulinate from L-glutamyl-tRNA(Glu): step 2/2. The sequence is that of Glutamate-1-semialdehyde 2,1-aminomutase from Alkalilimnicola ehrlichii (strain ATCC BAA-1101 / DSM 17681 / MLHE-1).